Consider the following 182-residue polypeptide: Probable phosphoheptose isomerase (182 aa).

In terms of domain architecture, SIS spans 29–182 (ISSAISSGNK…MICAMIDEKF (154 aa)). 44–46 (NGG) contributes to the substrate binding site. 2 residues coordinate Zn(2+): His-53 and Glu-57. Substrate contacts are provided by residues Glu-57, 86 to 87 (ND), 112 to 114 (STS), Ser-117, and Gln-164. Residues Gln-164 and His-172 each contribute to the Zn(2+) site.

Belongs to the SIS family. GmhA subfamily. Requires Zn(2+) as cofactor.

The protein localises to the cytoplasm. The enzyme catalyses 2 D-sedoheptulose 7-phosphate = D-glycero-alpha-D-manno-heptose 7-phosphate + D-glycero-beta-D-manno-heptose 7-phosphate. It functions in the pathway carbohydrate biosynthesis; D-glycero-D-manno-heptose 7-phosphate biosynthesis; D-glycero-alpha-D-manno-heptose 7-phosphate and D-glycero-beta-D-manno-heptose 7-phosphate from sedoheptulose 7-phosphate: step 1/1. Functionally, catalyzes the isomerization of sedoheptulose 7-phosphate in D-glycero-D-manno-heptose 7-phosphate. The polypeptide is Probable phosphoheptose isomerase (Thermoplasma acidophilum (strain ATCC 25905 / DSM 1728 / JCM 9062 / NBRC 15155 / AMRC-C165)).